The chain runs to 95 residues: Acylphosphatase (95 aa).

The 88-residue stretch at 8–95 folds into the Acylphosphatase-like domain; the sequence is RVSARITGRV…DAFEGFRVRR (88 aa). Residues arginine 23 and asparagine 41 contribute to the active site.

Belongs to the acylphosphatase family.

It carries out the reaction an acyl phosphate + H2O = a carboxylate + phosphate + H(+). In Salinibacter ruber (strain DSM 13855 / M31), this protein is Acylphosphatase (acyP).